We begin with the raw amino-acid sequence, 32 residues long: Secreted protein F2 (32 aa).

The protein localises to the secreted. In Globisporangium hypogynum (Pythium hypogynum), this protein is Secreted protein F2.